The following is a 247-amino-acid chain: Orotidine 5'-phosphate decarboxylase (247 aa).

Substrate-binding positions include Asp-22, Lys-44, 71 to 80 (DLKFHDIPNT), Thr-131, Arg-192, Gln-201, Gly-221, and Arg-222. Catalysis depends on Lys-73, which acts as the Proton donor.

The protein belongs to the OMP decarboxylase family. Type 1 subfamily. In terms of assembly, homodimer.

It catalyses the reaction orotidine 5'-phosphate + H(+) = UMP + CO2. It functions in the pathway pyrimidine metabolism; UMP biosynthesis via de novo pathway; UMP from orotate: step 2/2. Its function is as follows. Catalyzes the decarboxylation of orotidine 5'-monophosphate (OMP) to uridine 5'-monophosphate (UMP). The polypeptide is Orotidine 5'-phosphate decarboxylase (Pectobacterium atrosepticum (strain SCRI 1043 / ATCC BAA-672) (Erwinia carotovora subsp. atroseptica)).